A 396-amino-acid polypeptide reads, in one-letter code: S-adenosylmethionine synthase (396 aa).

Histidine 15 contacts ATP. Residue aspartate 17 participates in Mg(2+) binding. Glutamate 43 serves as a coordination point for K(+). L-methionine contacts are provided by glutamate 56 and glutamine 99. The flexible loop stretch occupies residues 99–109 (QSADIALGVDR). ATP is bound by residues 175 to 177 (DGK), 241 to 242 (RF), aspartate 250, 256 to 257 (RK), alanine 273, and lysine 277. L-methionine is bound at residue aspartate 250. Lysine 281 is a binding site for L-methionine.

This sequence belongs to the AdoMet synthase family. In terms of assembly, homotetramer; dimer of dimers. Requires Mg(2+) as cofactor. K(+) is required as a cofactor.

It localises to the cytoplasm. It catalyses the reaction L-methionine + ATP + H2O = S-adenosyl-L-methionine + phosphate + diphosphate. The protein operates within amino-acid biosynthesis; S-adenosyl-L-methionine biosynthesis; S-adenosyl-L-methionine from L-methionine: step 1/1. Catalyzes the formation of S-adenosylmethionine (AdoMet) from methionine and ATP. The overall synthetic reaction is composed of two sequential steps, AdoMet formation and the subsequent tripolyphosphate hydrolysis which occurs prior to release of AdoMet from the enzyme. The chain is S-adenosylmethionine synthase from Desulfitobacterium hafniense (strain DSM 10664 / DCB-2).